The sequence spans 209 residues: Ribonuclease HII (209 aa).

One can recognise an RNase H type-2 domain in the interval 19–209 (CIIVGVDEVG…LPGITKLYSK (191 aa)). Asp25, Glu26, and Asp118 together coordinate a divalent metal cation.

Belongs to the RNase HII family. Requires Mn(2+) as cofactor. Mg(2+) is required as a cofactor.

The protein localises to the cytoplasm. The enzyme catalyses Endonucleolytic cleavage to 5'-phosphomonoester.. Endonuclease that specifically degrades the RNA of RNA-DNA hybrids. The sequence is that of Ribonuclease HII from Ehrlichia canis (strain Jake).